Here is a 331-residue protein sequence, read N- to C-terminus: Vacuolar protein sorting-associated protein 26B (331 aa).

Residues 310 to 331 (AAQRYEGSNPEPTSAQAKEETD) form a disordered region.

Belongs to the VPS26 family. Component of the heterotrimeric retromer cargo-selective complex (CSC) which is believed to associate with variable sorting nexins to form functionally distinct retromer complex variants.

It localises to the cytoplasm. It is found in the membrane. The protein resides in the endosome. Acts as a component of the retromer cargo-selective complex (CSC). The CSC is believed to be the core functional component of retromer or respective retromer complex variants acting to prevent missorting of selected transmembrane cargo proteins into the lysosomal degradation pathway. Retromer mediates retrograde transport of cargo proteins from endosomes to the trans-Golgi network (TGN). The sequence is that of Vacuolar protein sorting-associated protein 26B (vps26b) from Danio rerio (Zebrafish).